A 431-amino-acid chain; its full sequence is UPF0597 protein TDE_2144 (431 aa).

It belongs to the UPF0597 family.

The sequence is that of UPF0597 protein TDE_2144 from Treponema denticola (strain ATCC 35405 / DSM 14222 / CIP 103919 / JCM 8153 / KCTC 15104).